The chain runs to 29 residues: Photosystem I reaction center subunit XII (29 aa).

A helical transmembrane segment spans residues 7-24; it reads FVALLLALVPAVLAYRLG.

The protein belongs to the PsaM family.

The protein resides in the cellular thylakoid membrane. This chain is Photosystem I reaction center subunit XII, found in Synechococcus sp. (strain ATCC 27144 / PCC 6301 / SAUG 1402/1) (Anacystis nidulans).